The primary structure comprises 124 residues: Class I hydrophobin 1 (124 aa).

The signal sequence occupies residues 1 to 18 (MRFSIATVVLSLAAMVVA). 4 disulfide bridges follow: Cys35–Cys85, Cys43–Cys79, Cys44–Cys63, and Cys86–Cys97.

Belongs to the fungal hydrophobin family.

Its subcellular location is the secreted. It localises to the cell wall. In terms of biological role, aerial growth, conidiation, and dispersal of filamentous fungi in the environment rely upon a capability of their secreting small amphipathic proteins called hydrophobins (HPBs) with low sequence identity. Class I can self-assemble into an outermost layer of rodlet bundles on aerial cell surfaces, conferring cellular hydrophobicity that supports fungal growth, development and dispersal; whereas Class II form highly ordered films at water-air interfaces through intermolecular interactions but contribute nothing to the rodlet structure. In Botryotinia fuckeliana, hydrophobins are not involved in conferring surface hydrophobicity to conidia and aerial hyphae and their function in sclerotia and fruiting bodies remains to be investigated. The sequence is that of Class I hydrophobin 1 (Bhp1) from Botryotinia fuckeliana (strain B05.10) (Noble rot fungus).